The primary structure comprises 100 residues: Putative pterin-4-alpha-carbinolamine dehydratase (100 aa).

Belongs to the pterin-4-alpha-carbinolamine dehydratase family.

The enzyme catalyses (4aS,6R)-4a-hydroxy-L-erythro-5,6,7,8-tetrahydrobiopterin = (6R)-L-erythro-6,7-dihydrobiopterin + H2O. The sequence is that of Putative pterin-4-alpha-carbinolamine dehydratase from Bradyrhizobium diazoefficiens (strain JCM 10833 / BCRC 13528 / IAM 13628 / NBRC 14792 / USDA 110).